Here is a 331-residue protein sequence, read N- to C-terminus: UPF0194 membrane protein YbhG (331 aa).

The first 19 residues, 1–19 (MKKPVVIGLAIAAIVAVIA), serve as a signal peptide directing secretion. Positions 107-208 (EEIAQAAAAV…LDLQDTTLIA (102 aa)) form a coiled coil.

The protein belongs to the UPF0194 family.

Its subcellular location is the periplasm. The sequence is that of UPF0194 membrane protein YbhG from Salmonella gallinarum (strain 287/91 / NCTC 13346).